Consider the following 935-residue polypeptide: LPS-assembly protein LptD (935 aa).

The N-terminal stretch at 1-33 (MALKSPAFRRKFPLLVTGGLLALQPLATSYVVA) is a signal peptide. Residues 52–85 (KTPVNNLPPRPVHEGAAVSSGTEAAGEAETADRP) are disordered. Residues 65-79 (EGAAVSSGTEAAGEA) show a composition bias toward low complexity.

It belongs to the LptD family. Component of the lipopolysaccharide transport and assembly complex. Interacts with LptE and LptA.

It localises to the cell outer membrane. Together with LptE, is involved in the assembly of lipopolysaccharide (LPS) at the surface of the outer membrane. The sequence is that of LPS-assembly protein LptD from Pseudomonas putida (strain ATCC 700007 / DSM 6899 / JCM 31910 / BCRC 17059 / LMG 24140 / F1).